A 268-amino-acid polypeptide reads, in one-letter code: CCAAT/enhancer-binding protein delta (268 aa).

3 disordered regions span residues 1-50 (MSAA…STTP), 98-132 (LELL…DAPG), and 152-223 (AAQP…QQKL). N-acetylserine is present on serine 2. Lysine 120 is covalently cross-linked (Glycyl lysine isopeptide (Lys-Gly) (interchain with G-Cter in SUMO)). Pro residues predominate over residues 155 to 173 (PTPPTSPEPPRGSPGPSLA). The span at 177–201 (VREKGAGKRGPDRGSPEYRQRRERN) shows a compositional bias: basic and acidic residues. Residues 191-254 (SPEYRQRRER…ASLRQFFKEL (64 aa)) enclose the bZIP domain. The tract at residues 195-222 (RQRRERNNIAVRKSRDKAKRRNQEMQQK) is basic motif. The leucine-zipper stretch occupies residues 226–254 (LSAENEKLHQRVEQLTRDLASLRQFFKEL).

It belongs to the bZIP family. C/EBP subfamily. As to quaternary structure, binds DNA as a homodimer and as a heterodimer. Can form stable heterodimers with CEBPA, CEBPB and CEBPE. Directly interacts with SPI1/PU.1; this interaction does not affect DNA-binding properties of each partner. Interacts with PRDM16. In terms of tissue distribution, ubiquitously expressed.

It localises to the nucleus. Functionally, transcription activator that recognizes two different DNA motifs: the CCAAT homology common to many promoters and the enhanced core homology common to many enhancers. Important transcription factor regulating the expression of genes involved in immune and inflammatory responses. Transcriptional activator that enhances IL6 transcription alone and as heterodimer with CEBPB. This is CCAAT/enhancer-binding protein delta (Cebpd) from Rattus norvegicus (Rat).